Reading from the N-terminus, the 263-residue chain is NADH dehydrogenase [ubiquinone] iron-sulfur protein 3, mitochondrial (263 aa).

The transit peptide at 1-35 (MVAAVARLWWRGLLGASALTRGAGRPSVLLLPVRR) directs the protein to the mitochondrion.

Belongs to the complex I 30 kDa subunit family. Core subunit of respiratory chain NADH dehydrogenase (Complex I) which is composed of 45 different subunits. Interacts with NDUFAF3. Interacts with RAB5IF. Found in subcomplexes containing subunits NDUFS2, MT-ND1 and NDUFA13.

It localises to the mitochondrion inner membrane. It carries out the reaction a ubiquinone + NADH + 5 H(+)(in) = a ubiquinol + NAD(+) + 4 H(+)(out). Functionally, core subunit of the mitochondrial membrane respiratory chain NADH dehydrogenase (Complex I) which catalyzes electron transfer from NADH through the respiratory chain, using ubiquinone as an electron acceptor. Essential for the catalytic activity and assembly of complex I. This Gorilla gorilla gorilla (Western lowland gorilla) protein is NADH dehydrogenase [ubiquinone] iron-sulfur protein 3, mitochondrial (NDUFS3).